The chain runs to 448 residues: uncharacterized protein (448 aa).

A compositionally biased stretch (basic and acidic residues) spans 187 to 198 (SKGDRGDADDRG). Disordered regions lie at residues 187-221 (SKGD…LPTR), 243-270 (LQVP…GATM), and 291-361 (LSGL…LPNG). Residues 243 to 261 (LQVPGGTSAAIPSASSTPS) show a composition bias toward low complexity. Residues 307–334 (FDERGQEVRDPADYEHSNEPDERRADDR) show a composition bias toward basic and acidic residues.

This sequence to M.tuberculosis Rv0025 and Rv0739.

This is an uncharacterized protein from Mycobacterium tuberculosis (strain ATCC 25618 / H37Rv).